The sequence spans 432 residues: D-amino acid dehydrogenase (432 aa).

An FAD-binding site is contributed by 3–17; that stretch reads VVILGSGVVGVTSAW.

Belongs to the DadA oxidoreductase family. Requires FAD as cofactor.

The enzyme catalyses a D-alpha-amino acid + A + H2O = a 2-oxocarboxylate + AH2 + NH4(+). It participates in amino-acid degradation; D-alanine degradation; NH(3) and pyruvate from D-alanine: step 1/1. In terms of biological role, oxidative deamination of D-amino acids. The chain is D-amino acid dehydrogenase from Salmonella agona (strain SL483).